The following is a 243-amino-acid chain: uncharacterized protein (243 aa).

Residues 26–204 form the VWFA domain; sequence RVGLVLDITG…ISDDELYDAL (179 aa). The interval 222 to 243 is disordered; it reads REQEPPAEKPKKKGFFSRLFSK. The span at 231 to 243 shows a compositional bias: basic residues; the sequence is PKKKGFFSRLFSK.

This is an uncharacterized protein from Bacillus subtilis (strain 168).